We begin with the raw amino-acid sequence, 344 residues long: Protein RecA (344 aa).

65–72 (GPESSGKT) is an ATP binding site. Basic and acidic residues predominate over residues 323-337 (ELREKFQPAEAPREA). A disordered region spans residues 323 to 344 (ELREKFQPAEAPREAGDDEDKE).

The protein belongs to the RecA family.

Its subcellular location is the cytoplasm. In terms of biological role, can catalyze the hydrolysis of ATP in the presence of single-stranded DNA, the ATP-dependent uptake of single-stranded DNA by duplex DNA, and the ATP-dependent hybridization of homologous single-stranded DNAs. It interacts with LexA causing its activation and leading to its autocatalytic cleavage. The chain is Protein RecA from Xanthomonas axonopodis pv. citri (strain 306).